The sequence spans 78 residues: Antitoxin VapB27 (78 aa).

One can recognise a SpoVT-AbrB domain in the interval M1–R45.

It belongs to the VapB family. In terms of assembly, interacts with cognate toxin VapC27 and non-cognate toxins MazF6 and VapC40. Interaction with MazF6 and MazF9 partially neutralizes the toxins.

Antitoxin component of a type II toxin-antitoxin (TA) system. Cognate toxin is VapC27. Upon expression in E.coli partially counteracts the ribonuclease activity of non-cognate toxins MazF6 and MazF9. The chain is Antitoxin VapB27 (vapB27) from Mycobacterium tuberculosis (strain ATCC 25618 / H37Rv).